The sequence spans 90 residues: Small ribosomal subunit protein uS15c (90 aa).

This sequence belongs to the universal ribosomal protein uS15 family. Part of the 30S ribosomal subunit.

It localises to the plastid. The protein localises to the chloroplast. This is Small ribosomal subunit protein uS15c (rps15) from Morus indica (Mulberry).